Here is a 253-residue protein sequence, read N- to C-terminus: Ribonuclease HII (253 aa).

One can recognise an RNase H type-2 domain in the interval 70–253 (DLIAGVDEVG…KTFAPIKDIL (184 aa)). Residues D76, E77, and D168 each coordinate a divalent metal cation.

Belongs to the RNase HII family. Requires Mn(2+) as cofactor. Mg(2+) serves as cofactor.

It is found in the cytoplasm. It carries out the reaction Endonucleolytic cleavage to 5'-phosphomonoester.. Its function is as follows. Endonuclease that specifically degrades the RNA of RNA-DNA hybrids. The protein is Ribonuclease HII of Leuconostoc mesenteroides subsp. mesenteroides (strain ATCC 8293 / DSM 20343 / BCRC 11652 / CCM 1803 / JCM 6124 / NCDO 523 / NBRC 100496 / NCIMB 8023 / NCTC 12954 / NRRL B-1118 / 37Y).